Here is a 265-residue protein sequence, read N- to C-terminus: uncharacterized protein (265 aa).

A divalent metal cation contacts are provided by histidine 7, histidine 9, glutamate 95, histidine 131, histidine 156, and aspartate 206.

It belongs to the metallo-dependent hydrolases superfamily. TatD-type hydrolase family. A divalent metal cation serves as cofactor.

This is an uncharacterized protein from Buchnera aphidicola subsp. Baizongia pistaciae (strain Bp).